We begin with the raw amino-acid sequence, 393 residues long: Methyltransferase-like protein 22 (393 aa).

The tract at residues 54-87 (WTDSGAEDSGPTDVSTEEMPPAGSGSGHSHEDLS) is disordered. A Phosphoserine modification is found at serine 120.

This sequence belongs to the methyltransferase superfamily. METTL22 family. As to quaternary structure, interacts with members of the heat shock protein 90 and 70 families; these proteins probably are methylation substrates.

Its subcellular location is the nucleus. The catalysed reaction is L-lysyl-[protein] + 3 S-adenosyl-L-methionine = N(6),N(6),N(6)-trimethyl-L-lysyl-[protein] + 3 S-adenosyl-L-homocysteine + 3 H(+). Protein N-lysine methyltransferase. Trimethylates KIN at Lys-135 (in vitro). This chain is Methyltransferase-like protein 22 (Mettl22), found in Mus musculus (Mouse).